Reading from the N-terminus, the 314-residue chain is NF-kappa-B inhibitor alpha (314 aa).

The disordered stretch occupies residues 1–39 (MFQPAGHGQDWAMEGPRDGLKKERLVDDRHDSGLDSMKD). The segment covering 15 to 39 (GPRDGLKKERLVDDRHDSGLDSMKD) has biased composition (basic and acidic residues). Lys-21 is covalently cross-linked (Glycyl lysine isopeptide (Lys-Gly) (interchain with G-Cter in SUMO); alternate). Residue Lys-21 forms a Glycyl lysine isopeptide (Lys-Gly) (interchain with G-Cter in ubiquitin); alternate linkage. Lys-22 participates in a covalent cross-link: Glycyl lysine isopeptide (Lys-Gly) (interchain with G-Cter in ubiquitin). The short motif at 30–36 (HDSGLDS) is the Destruction motif element. Ser-32 bears the Phosphoserine; by IKKA and IKKB mark. Ser-36 carries the post-translational modification Phosphoserine; by IKKA, IKKB, IKKE and TBK1. Tyr-42 carries the post-translational modification Phosphotyrosine; by Tyr-kinases. The Nuclear export signal signature appears at 45-54 (MVKELREIRL). Positions 110–120 (LQQTPLHLAVI) match the Nuclear import signal motif. 4 ANK repeats span residues 110 to 139 (LQQT…DPEL), 143 to 172 (RGNT…PQHL), 182 to 211 (NGHT…DVNA), and 216 to 245 (NGRT…DVNR). (3S)-3-hydroxyasparagine; by HIF1AN occurs at positions 210 and 244. Ser-283 and Ser-288 each carry phosphoserine; by CK2. At Thr-291 the chain carries Phosphothreonine; by CK2. Residue Ser-293 is modified to Phosphoserine; by CK2. A Phosphothreonine modification is found at Thr-296.

Belongs to the NF-kappa-B inhibitor family. In terms of assembly, interacts with RELA; the interaction requires the nuclear import signal. Part of a 70-90 kDa complex at least consisting of CHUK, IKBKB, NFKBIA, RELA, ELP1 and MAP3K14. Interacts with NKIRAS1 and NKIRAS2. Interacts with RWDD3; the interaction enhances sumoylation. Interacts with PRMT2. Interacts with PRKACA in platelets; this interaction is disrupted by thrombin and collagen. Interacts with MEFV. Interacts with DDRGK1; positively regulates NFKBIA phosphorylation and degradation. Interacts with HNRNPA2B1; the interaction may be mediated by the RRM2 domain of HNRNPA2B1, and HNRNPA2B1 may interact simultaneously with FAM76B and either NFKBIA or NFKBIE to form a complex. Phosphorylated at Ser-32 and Ser-36 by IKKA/CHUK and IKKB/IKBKB; disables inhibition of NF-kappa-B DNA-binding activity. Phosphorylation at positions 32 and 36 is prerequisite to recognition by the SCF(FBXW11) and SCF(BTRC) complexes, leading to polyubiquitination and subsequent degradation. In terms of processing, polyubiquitinated at Lys-21 and/or Lys-22 following phosphorylation at Ser-32 and Ser-36. Monoubiquitinated at Lys-21 and/or Lys-22 by UBE2D3. Ubiquitin chain elongation is then performed by CDC34 in cooperation with the SCF(FBXW11) E3 ligase complex, building ubiquitin chains from the UBE2D3-primed NFKBIA-linked ubiquitin. The resulting polyubiquitination leads to protein degradation. Also ubiquitinated by the SCF(BTRC) complex following stimulus-dependent phosphorylation at Ser-32 and Ser-36. Deubiquitinated by USP38, leading to NF-kappa-B inhibition. Post-translationally, sumoylated; sumoylation requires the presence of the nuclear import signal. Sumoylation blocks ubiquitination and proteasome-mediated degradation of the protein thereby increasing the protein stability. Hydroxylated by HIF1AN.

Its subcellular location is the cytoplasm. The protein localises to the nucleus. Inhibits the activity of dimeric NF-kappa-B/REL complexes by trapping REL (RELA/p65 and NFKB1/p50) dimers in the cytoplasm by masking their nuclear localization signals. On cellular stimulation by immune and pro-inflammatory responses, becomes phosphorylated promoting ubiquitination and degradation, enabling the dimeric RELA to translocate to the nucleus and activate transcription. The chain is NF-kappa-B inhibitor alpha (Nfkbia) from Rattus norvegicus (Rat).